A 453-amino-acid polypeptide reads, in one-letter code: Vacuolar cation/proton exchanger 1b (453 aa).

The Cytoplasmic portion of the chain corresponds to 1–67 (MPVSRMMMES…LRSLLANLND (67 aa)). The helical transmembrane segment at 68–85 (VLLTTRLFLLFPAVLLAI) threads the bilayer. Over 86 to 91 (AATYLH) the chain is Extracellular. Residues 92–109 (FGQVWVFVLSLIGLVPLA) form a helical membrane-spanning segment. Over 110–126 (ERLSFLTEQIAFYTGPT) the chain is Cytoplasmic. A helical transmembrane segment spans residues 127-147 (VGGLLNATFGNVTEVIIALLA). The interval 136-171 (GNVTEVIIALLALREGKIEVVKCSLLGSILSNLLLV) is cation selection. Residues 148-160 (LREGKIEVVKCSL) are Extracellular-facing. Residues 161–181 (LGSILSNLLLVLGTSLFLAGI) form a helical membrane-spanning segment. Topologically, residues 182–194 (ANLRAHQPYDTKQ) are cytoplasmic. Residues 195–215 (AHVNTALLMLAVLCHSLPLML) traverse the membrane as a helical segment. Over 216–232 (RYAVTSGDHAIVSGDAA) the chain is Extracellular. Residues 233–253 (LHLSRACSILMLIAYLAYLFF) traverse the membrane as a helical segment. Topologically, residues 254–283 (QLNTHRQLFEPQQVEDDDDDDLVIAQDDEP) are cytoplasmic. A helical transmembrane segment spans residues 284-304 (VLGFSSAMIWLALMTLLTALL). Topologically, residues 305-327 (SGYVVSTIEAASESWELSVSFIS) are extracellular. The helical transmembrane segment at 328–348 (IILLPIVGNAAEHAGAVIFAL) threads the bilayer. Positions 335–370 (GNAAEHAGAVIFALKNKMDITLGVSLGSATQISMFV) are cation selection. Residues 349–364 (KNKMDITLGVSLGSAT) are Cytoplasmic-facing. The helical transmembrane segment at 365–385 (QISMFVVPVSVIVAWTMGIPM) threads the bilayer. Topologically, residues 386–388 (DLD) are extracellular. The helical transmembrane segment at 389–409 (FNLLETGSLFLAILVTAFTLQ) threads the bilayer. Over 410–414 (EGESH) the chain is Cytoplasmic. The helical transmembrane segment at 415-435 (YLKGLILVLCYAVISVCFFVI) threads the bilayer. Over 436-453 (RRRSAGGTDGVHHLDVIV) the chain is Extracellular.

The protein belongs to the Ca(2+):cation antiporter (CaCA) (TC 2.A.19) family. Cation/proton exchanger (CAX) subfamily. As to expression, expressed in embryo and roots.

The protein localises to the vacuole membrane. Functionally, vacuolar cation/proton exchanger (CAX). Translocates Ca(2+) and other metal ions into vacuoles using the proton gradient formed by H(+)-ATPase and H(+)-pyrophosphatase. In Oryza sativa subsp. japonica (Rice), this protein is Vacuolar cation/proton exchanger 1b (CAX1b).